Reading from the N-terminus, the 406-residue chain is MRALVYDCSAGISGDMNLAALIDLGADRENLERELSKLHVHGEWKLECRPAQQHGIRGTRIDVLTEEEGHSGSSHAHHHRTMADIRKLIETSALSNTVKRTALSIFTLLAEAEARVHGTTSEEVHFHEVGAVDSIIDIAGAAICLEMLRVDTVFTGPVELGSGTVTCQHGTMPVPAPATALLAKHFRATLNGTTHEATTPTGAAYIAALAQPVPSPLAGRITATGYGIGHRQGLPVPNILRVMLVETEEEETSPELLTELCANIDDMTPEQTAYLAEKLMEAGALDTWQESVCMKKGRLAVKVCALCQPEQTDRVREAFFRHSSTPGIRQHGMLRHILRRESAPVHTPHGTVHVKTSFMHGRPHYRKAEFEDCRILAEKTGLPLGQCQLMGLFPTSSHDNDATDSV.

This sequence belongs to the LarC family.

The catalysed reaction is Ni(II)-pyridinium-3,5-bisthiocarboxylate mononucleotide = pyridinium-3,5-bisthiocarboxylate mononucleotide + Ni(2+). In terms of biological role, involved in the biosynthesis of a nickel-pincer cofactor ((SCS)Ni(II) pincer complex). Binds Ni(2+), and functions in nickel delivery to pyridinium-3,5-bisthiocarboxylic acid mononucleotide (P2TMN), to form the mature cofactor. Is thus probably required for the activation of nickel-pincer cofactor-dependent enzymes. This is Pyridinium-3,5-bisthiocarboxylic acid mononucleotide nickel insertion protein from Akkermansia muciniphila (strain ATCC BAA-835 / DSM 22959 / JCM 33894 / BCRC 81048 / CCUG 64013 / CIP 107961 / Muc).